A 581-amino-acid polypeptide reads, in one-letter code: Oligo-1,6-glucosidase IMA5 (581 aa).

Asp210 (nucleophile) is an active-site residue. Glu272 functions as the Proton donor in the catalytic mechanism.

It belongs to the glycosyl hydrolase 13 family.

The catalysed reaction is Hydrolysis of (1-&gt;6)-alpha-D-glucosidic linkages in some oligosaccharides produced from starch and glycogen by alpha-amylase, and in isomaltose.. In terms of biological role, alpha-glucosidase with specificity for isomaltose, maltose, and palatinose. The protein is Oligo-1,6-glucosidase IMA5 (IMA5) of Saccharomyces cerevisiae (strain ATCC 204508 / S288c) (Baker's yeast).